Consider the following 579-residue polypeptide: CTP synthase (579 aa).

Positions 1 to 281 (MPALRKHPQT…DAYVVRRLNL (281 aa)) are amidoligase domain. Ser-23 contacts CTP. Ser-23 provides a ligand contact to UTP. ATP contacts are provided by residues 24 to 29 (SLGKGL) and Asp-81. Mg(2+)-binding residues include Asp-81 and Glu-155. CTP is bound by residues 162 to 164 (DIE), 202 to 207 (KTKPTQ), and Lys-238. Residues 202-207 (KTKPTQ) and Lys-238 each bind UTP. Positions 306–554 (RIALVGKYID…IGAALDYKAA (249 aa)) constitute a Glutamine amidotransferase type-1 domain. L-glutamine is bound at residue Gly-369. The Nucleophile; for glutamine hydrolysis role is filled by Cys-396. Residues 397 to 400 (LGLQ), Glu-419, and Arg-480 each bind L-glutamine. Residues His-527 and Glu-529 contribute to the active site.

This sequence belongs to the CTP synthase family. In terms of assembly, homotetramer.

It carries out the reaction UTP + L-glutamine + ATP + H2O = CTP + L-glutamate + ADP + phosphate + 2 H(+). The enzyme catalyses L-glutamine + H2O = L-glutamate + NH4(+). It catalyses the reaction UTP + NH4(+) + ATP = CTP + ADP + phosphate + 2 H(+). It functions in the pathway pyrimidine metabolism; CTP biosynthesis via de novo pathway; CTP from UDP: step 2/2. With respect to regulation, allosterically activated by GTP, when glutamine is the substrate; GTP has no effect on the reaction when ammonia is the substrate. The allosteric effector GTP functions by stabilizing the protein conformation that binds the tetrahedral intermediate(s) formed during glutamine hydrolysis. Inhibited by the product CTP, via allosteric rather than competitive inhibition. Functionally, catalyzes the ATP-dependent amination of UTP to CTP with either L-glutamine or ammonia as the source of nitrogen. Regulates intracellular CTP levels through interactions with the four ribonucleotide triphosphates. This chain is CTP synthase, found in Mycobacterium sp. (strain JLS).